The primary structure comprises 1060 residues: Protein transport protein Sec16B (1060 aa).

Residues 1–86 (MELWAPQRLP…GDWHQPVSGV (86 aa)) form a disordered region. Positions 34–224 (RPVPHSWHNG…PSLASESNLL (191 aa)) are required for endoplasmic reticulum localization. Residues 41-50 (HNGERFHQWQ) are compositionally biased toward basic and acidic residues. The segment covering 51–60 (DNRGSPQPQQ) has biased composition (polar residues). Phosphoserine occurs at positions 55, 143, 167, 188, and 191. 5 disordered regions span residues 163–236 (ENQH…SSSY), 245–264 (APER…QADV), 711–733 (KVAG…GGTT), 770–796 (PSPQ…GTPR), and 834–1060 (PGEN…TQPC). Composition is skewed to polar residues over residues 165–195 (QHSP…NSGQ) and 213–222 (NKPSLASESN). The span at 223 to 236 (LLQQRESGLSSSSY) shows a compositional bias: low complexity. A phosphoserine mark is found at Ser254 and Ser258. Residues 271–713 (APMKFYIPHV…LRRQLEQKVA (443 aa)) form a central conserved domain (CCD); required for localization to endoplasmic reticulum exit sites region. The span at 837–847 (NTVSQETSQPP) shows a compositional bias: polar residues. At Thr858 the chain carries Phosphothreonine. A phosphoserine mark is found at Ser868, Ser871, Ser874, Ser882, and Ser883. Composition is skewed to basic and acidic residues over residues 875-890 (AKED…DKNS) and 899-908 (KLGDGKEHTK). The span at 909 to 918 (SSGFGWFSWF) shows a compositional bias: low complexity. Over residues 930–941 (GDEDSSDSPDSE) the composition is skewed to acidic residues. Over residues 991 to 1001 (AAAGAGVGGLS) the composition is skewed to gly residues. Residues 1031–1046 (NPSQVPQLPTATSLNR) are compositionally biased toward polar residues.

It belongs to the SEC16 family. SEC16A and SEC16B are each present in multiple copies in a heteromeric complex. Interacts with TFG. Interacts with SEC13. In terms of tissue distribution, ubiquitous.

Its subcellular location is the endoplasmic reticulum membrane. It is found in the golgi apparatus membrane. In terms of biological role, plays a role in the organization of the endoplasmic reticulum exit sites (ERES), also known as transitional endoplasmic reticulum (tER). Required for secretory cargo traffic from the endoplasmic reticulum to the Golgi apparatus. Involved in peroxisome biogenesis. Regulates the transport of peroxisomal biogenesis factors PEX3 and PEX16 from the ER to peroxisomes. This Homo sapiens (Human) protein is Protein transport protein Sec16B (SEC16B).